We begin with the raw amino-acid sequence, 504 residues long: Cytochrome P450 7A1 (504 aa).

The chain crosses the membrane as a helical span at residues 4-24 (TSLIWGIAIAACCCLWLILGI). Residue cysteine 444 participates in heme binding.

The protein belongs to the cytochrome P450 family. Heme is required as a cofactor. Detected in liver.

The protein localises to the endoplasmic reticulum membrane. Its subcellular location is the microsome membrane. The enzyme catalyses cholesterol + reduced [NADPH--hemoprotein reductase] + O2 = 7alpha-hydroxycholesterol + oxidized [NADPH--hemoprotein reductase] + H2O + H(+). It carries out the reaction 4beta-hydroxycholesterol + reduced [NADPH--hemoprotein reductase] + O2 = 4beta,7alpha-dihydroxycholesterol + oxidized [NADPH--hemoprotein reductase] + H2O + H(+). The catalysed reaction is lathosterol + reduced [NADPH--hemoprotein reductase] + O2 = 7alpha,8alpha-epoxy-5alpha-cholestan-3beta-ol + oxidized [NADPH--hemoprotein reductase] + H2O + H(+). It catalyses the reaction lathosterol + reduced [NADPH--hemoprotein reductase] + O2 = 5alpha-cholestan-7-oxo-3beta-ol + oxidized [NADPH--hemoprotein reductase] + H2O + H(+). The enzyme catalyses 7-dehydrocholesterol + reduced [NADPH--hemoprotein reductase] + O2 = 7-oxocholesterol + oxidized [NADPH--hemoprotein reductase] + H2O + H(+). It carries out the reaction (24S)-hydroxycholesterol + reduced [NADPH--hemoprotein reductase] + O2 = (24S)-7alpha-dihydroxycholesterol + oxidized [NADPH--hemoprotein reductase] + H2O + H(+). The catalysed reaction is (24R)-hydroxycholesterol + reduced [NADPH--hemoprotein reductase] + O2 = (24R)-7alpha-dihydroxycholesterol + oxidized [NADPH--hemoprotein reductase] + H2O + H(+). It functions in the pathway lipid metabolism; bile acid biosynthesis. Its pathway is steroid metabolism; cholesterol degradation. A cytochrome P450 monooxygenase involved in the metabolism of endogenous cholesterol and its oxygenated derivatives (oxysterols). Mechanistically, uses molecular oxygen inserting one oxygen atom into a substrate, and reducing the second into a water molecule, with two electrons provided by NADPH via cytochrome P450 reductase (CPR; NADPH-ferrihemoprotein reductase). Functions as a critical regulatory enzyme of bile acid biosynthesis and cholesterol homeostasis. Catalyzes the hydroxylation of carbon hydrogen bond at 7-alpha position of cholesterol, a rate-limiting step in cholesterol catabolism and bile acid biosynthesis. 7-alpha hydroxylates several oxysterols, including 4beta-hydroxycholesterol and 24-hydroxycholesterol. Catalyzes the oxidation of the 7,8 double bond of 7-dehydrocholesterol and lathosterol with direct and predominant formation of the 7-keto derivatives. This Homo sapiens (Human) protein is Cytochrome P450 7A1.